A 104-amino-acid chain; its full sequence is Co-chaperonin GroES (104 aa).

It belongs to the GroES chaperonin family. As to quaternary structure, heptamer of 7 subunits arranged in a ring. Interacts with the chaperonin GroEL.

It localises to the cytoplasm. In terms of biological role, together with the chaperonin GroEL, plays an essential role in assisting protein folding. The GroEL-GroES system forms a nano-cage that allows encapsulation of the non-native substrate proteins and provides a physical environment optimized to promote and accelerate protein folding. GroES binds to the apical surface of the GroEL ring, thereby capping the opening of the GroEL channel. The polypeptide is Co-chaperonin GroES (Acidiphilium cryptum (strain JF-5)).